Consider the following 671-residue polypeptide: Phenol 2-monooxygenase (671 aa).

FAD is bound by residues 10 to 43 (DVLI…RIFD) and 295 to 305 (LQEGRVFLAGD).

It belongs to the PheA/TfdB FAD monooxygenase family. The cofactor is FAD.

The protein resides in the cytoplasm. The catalysed reaction is phenol + NADPH + O2 + H(+) = catechol + NADP(+) + H2O. It participates in aromatic compound metabolism; phenol degradation. Hydroxylates phenol to catechol. Also acts on cresols. The protein is Phenol 2-monooxygenase (tbuD) of Ralstonia pickettii (Burkholderia pickettii).